The following is a 222-amino-acid chain: dTTP/UTP pyrophosphatase (222 aa).

The active-site Proton acceptor is Asp83.

Belongs to the Maf family. YhdE subfamily. It depends on a divalent metal cation as a cofactor.

The protein localises to the cytoplasm. The enzyme catalyses dTTP + H2O = dTMP + diphosphate + H(+). It carries out the reaction UTP + H2O = UMP + diphosphate + H(+). In terms of biological role, nucleoside triphosphate pyrophosphatase that hydrolyzes dTTP and UTP. May have a dual role in cell division arrest and in preventing the incorporation of modified nucleotides into cellular nucleic acids. The sequence is that of dTTP/UTP pyrophosphatase from Desulfitobacterium hafniense (strain Y51).